The primary structure comprises 975 residues: Importin-11 (975 aa).

Met-1 carries the post-translational modification N-acetylmethionine. Positions 28 to 100 constitute an Importin N-terminal domain; that stretch reads AEEQLKQWET…RAGLITNFNE (73 aa). HEAT repeat units follow at residues 123–160, 283–317, 318–356, 422–459, 473–509, 511–548, 555–593, 600–636, 640–677, 683–720, 731–773, 819–849, 850–887, and 957–974; these read RQWPELIPTLVESVKVQDDLRQHRALLTFYHVTKTLAS, QHPISFTPLIQRSLEFSVSYVFTEVGEGVTFERFI, VQCMNLIKMIVKNYAYKPSKNFEDSSPETLEAHKIKMAF, QTLTPVLLEMMQTLEGPTNVEDMNALLIKDAVYNAVGL, WFKTQLLPELQVSHNRYKPLRRRVIWLIGQWISVKFK, DLRPMLYEAICNLLQDQDLVVRIETATTLKLTVDDFEF, PYLETMFTLLFQLLQQVTECDTKMHVLHVLSCVIERVNV, GCLVQYLPLLWKQSEEHNMLRCAILTTLIHLVQGLGA, NLYPFLLPVIQLSTDVSQPPHVYLLEDGLELWLVTLEN, PELLRIFQNMSPLLELSSENLRTCFKIINGYIFLSSTE, QSFY…ILPC, QEMDQLLGNVIEMWVDRMDNITQPERKKLSA, LALLSLLPSDNSVIQDKFCGIINISVEALHDVMTEDPE, and METVDTEIVTQLQEFLQG. At Ser-343 the chain carries Phosphoserine.

Belongs to the importin beta family. As to quaternary structure, interacts with UBE2E3 and RPL12.

It localises to the cytoplasm. The protein resides in the nucleus. Functionally, functions in nuclear protein import as nuclear transport receptor. Serves as receptor for nuclear localization signals (NLS) in cargo substrates. Is thought to mediate docking of the importin/substrate complex to the nuclear pore complex (NPC) through binding to nucleoporin and the complex is subsequently translocated through the pore by an energy requiring, Ran-dependent mechanism. At the nucleoplasmic side of the NPC, Ran binds to the importin, the importin/substrate complex dissociates and importin is re-exported from the nucleus to the cytoplasm where GTP hydrolysis releases Ran. The directionality of nuclear import is thought to be conferred by an asymmetric distribution of the GTP- and GDP-bound forms of Ran between the cytoplasm and nucleus. Mediates the nuclear import of RPL12, and of UBE2E3. In Mus musculus (Mouse), this protein is Importin-11 (Ipo11).